An 885-amino-acid chain; its full sequence is MGEQATYDHHAIEQHWQREWDDADVFRVPDDADDPEYVLAMFPYTSGQLHMGHVRNYAITDAFARYRRMDGEDVLHPMGWDSFGLPAENAANERDTNPREWTERCIDQMRDQFEALGFGYDWEREITTCDPDYYKWNQWLFTEFRDAGLVDRRAATVNWCPSCETVLADEQVEGDDELCWRCDTPVTERDLDQWFFETTAYADELLDGLDELDGWPSNVRDMQRNWVGRTDGVEVPFTVHTPDGDEDVVAFTTRVDTIHGATYFALAPDHPLAEAAADRDDDVAHFVEEVADPDGDEPQGVETEFTATNPATGAEIPVVVADFVLSDVGTGALMAVPAHDDRDHEFAQAHDLPVRQVVAPAGDEDADVEAAAYTADGVLVNAGDYTGLDSETAREELTADIDGAASAVQYQLRDWGVSRQRYWGTPIPIVHCESCGPVSVPDDDLPVELPEFVHTTGNPLDAAEDWKQTTCPDCGAPAVRETDTMDTFLDSSWYFLRFASPAFDDAPFDTQRANDWLPVDEYVGGDEHAVMHLLYSRFVTKAFADLDMLEHREPFAGLTTQGMVLGEDGTKMSKSKDNGVAPERIVDEYGADTARLFTLRAARPSKAFPWSEEGVRSSHTFLERLLSMARAVNADATADGDLDPAAEYVARETAATVQAATTHFDDMEFNRAVQAVDELVSLLVRYRDRDDAAPAVVARGVTAAVKLLAPIAPHVAEECWTALGGDGFVAEAAWPTPDRDVSDHDRATSLIEQTREDVRDIVDTAGIENPTGVDVVTAPEWMYDVLARAKAADGNVVGSVMSDQSLQQHGEDAADYAKDLAAQAPAFPDVLGPDGERDALGRAVWLLEAEFDAPVRVLAAEDAADSVANKAEPGRPAIHVDEADD.

The short motif at 43 to 53 (PYTSGQLHMGH) is the 'HIGH' region element. Residues 571 to 575 (KMSKS) carry the 'KMSKS' region motif. Position 574 (Lys574) interacts with ATP. Positions 866–885 (SVANKAEPGRPAIHVDEADD) are disordered.

This sequence belongs to the class-I aminoacyl-tRNA synthetase family.

Its subcellular location is the cytoplasm. It catalyses the reaction tRNA(Leu) + L-leucine + ATP = L-leucyl-tRNA(Leu) + AMP + diphosphate. The protein is Leucine--tRNA ligase of Halobacterium salinarum (strain ATCC 700922 / JCM 11081 / NRC-1) (Halobacterium halobium).